Reading from the N-terminus, the 406-residue chain is Argininosuccinate synthase (406 aa).

Residues 14-22 (AYSGGLDTS) and alanine 41 each bind ATP. Residues tyrosine 92 and serine 97 each coordinate L-citrulline. An ATP-binding site is contributed by glycine 122. L-aspartate contacts are provided by threonine 124, asparagine 128, and aspartate 129. Asparagine 128 is a binding site for L-citrulline. Arginine 132, serine 181, serine 190, glutamate 266, and tyrosine 278 together coordinate L-citrulline.

Belongs to the argininosuccinate synthase family. Type 1 subfamily. Homotetramer.

It is found in the cytoplasm. The catalysed reaction is L-citrulline + L-aspartate + ATP = 2-(N(omega)-L-arginino)succinate + AMP + diphosphate + H(+). Its pathway is amino-acid biosynthesis; L-arginine biosynthesis; L-arginine from L-ornithine and carbamoyl phosphate: step 2/3. This Geobacter metallireducens (strain ATCC 53774 / DSM 7210 / GS-15) protein is Argininosuccinate synthase.